The following is a 617-amino-acid chain: V-type proton ATPase catalytic subunit A (617 aa).

Position 250 to 257 (glycine 250 to threonine 257) interacts with ATP.

This sequence belongs to the ATPase alpha/beta chains family. In terms of assembly, V-ATPase is a heteromultimeric enzyme made up of two complexes: the ATP-hydrolytic V1 complex and the proton translocation V0 complex. The V1 complex consists of three catalytic AB heterodimers that form a heterohexamer, three peripheral stalks each consisting of EG heterodimers, one central rotor including subunits D and F, and the regulatory subunits C and H. The proton translocation complex V0 consists of the proton transport subunit a, a ring of proteolipid subunits c9c'', rotary subunit d, subunits e and f, and the accessory subunits VhaAC45 and ATP6AP2.

The catalysed reaction is ATP + H2O + 4 H(+)(in) = ADP + phosphate + 5 H(+)(out). With respect to regulation, ATP hydrolysis occurs at the interface between the nucleotide-binding domains of subunits A and B. ATP hydrolysis triggers a conformational change in the subunits D and F, which induces a shift of subunit d. The c-ring is subsequently rotated and results in a continuous proton translocation across the membrane. Its function is as follows. Catalytic subunit of the V1 complex of vacuolar(H+)-ATPase (V-ATPase), a multisubunit enzyme composed of a peripheral complex (V1) that hydrolyzes ATP and a membrane integral complex (V0) that translocates protons. V-ATPase is responsible for acidifying and maintaining the pH of intracellular compartments and in some cell types, is targeted to the plasma membrane, where it is responsible for acidifying the extracellular environment. The chain is V-type proton ATPase catalytic subunit A (VHAA) from Manduca sexta (Tobacco hawkmoth).